The following is a 288-amino-acid chain: ATP synthase gamma chain (288 aa).

Belongs to the ATPase gamma chain family. F-type ATPases have 2 components, CF(1) - the catalytic core - and CF(0) - the membrane proton channel. CF(1) has five subunits: alpha(3), beta(3), gamma(1), delta(1), epsilon(1). CF(0) has three main subunits: a, b and c.

Its subcellular location is the cell inner membrane. Functionally, produces ATP from ADP in the presence of a proton gradient across the membrane. The gamma chain is believed to be important in regulating ATPase activity and the flow of protons through the CF(0) complex. This chain is ATP synthase gamma chain, found in Rickettsia bellii (strain OSU 85-389).